The sequence spans 222 residues: Eukaryotic translation initiation factor 3 subunit K (222 aa).

The PCI domain occupies 46–208; the sequence is YDLEANLAVL…KIKTKNITEK (163 aa).

Belongs to the eIF-3 subunit K family. As to quaternary structure, component of the eukaryotic translation initiation factor 3 (eIF-3) complex. The eIF-3 complex interacts with pix.

The protein resides in the cytoplasm. Its function is as follows. Component of the eukaryotic translation initiation factor 3 (eIF-3) complex, which is involved in protein synthesis of a specialized repertoire of mRNAs and, together with other initiation factors, stimulates binding of mRNA and methionyl-tRNAi to the 40S ribosome. The eIF-3 complex specifically targets and initiates translation of a subset of mRNAs involved in cell proliferation. The protein is Eukaryotic translation initiation factor 3 subunit K of Drosophila erecta (Fruit fly).